The following is a 90-amino-acid chain: U7-theraphotoxin-Hhn1i (90 aa).

A signal peptide spans 1–19; sequence MKTAIFTVVLALAVFAVLS. Positions 20-50 are excised as a propeptide; sequence FGWEANEKALSEEFTELIHEKEAASETEARE. Disulfide bonds link cysteine 51–cysteine 65, cysteine 58–cysteine 70, and cysteine 64–cysteine 81.

Belongs to the neurotoxin 10 (Hwtx-1) family. 13 (Hntx-13) subfamily. In terms of tissue distribution, expressed by the venom gland.

Its subcellular location is the secreted. Its function is as follows. Ion channel inhibitor. The protein is U7-theraphotoxin-Hhn1i of Cyriopagopus hainanus (Chinese bird spider).